Consider the following 282-residue polypeptide: NH(3)-dependent NAD(+) synthetase (282 aa).

51-58 (GISGGVDS) is an ATP binding site. D57 is a binding site for Mg(2+). R148 lines the deamido-NAD(+) pocket. T168 provides a ligand contact to ATP. E173 is a Mg(2+) binding site. Deamido-NAD(+)-binding residues include K181 and D188. Residues K197 and T219 each coordinate ATP. 268–269 (HK) contacts deamido-NAD(+).

Belongs to the NAD synthetase family. Homodimer.

The catalysed reaction is deamido-NAD(+) + NH4(+) + ATP = AMP + diphosphate + NAD(+) + H(+). The protein operates within cofactor biosynthesis; NAD(+) biosynthesis; NAD(+) from deamido-NAD(+) (ammonia route): step 1/1. Its function is as follows. Catalyzes the ATP-dependent amidation of deamido-NAD to form NAD. Uses ammonia as a nitrogen source. This is NH(3)-dependent NAD(+) synthetase from Burkholderia cenocepacia (strain HI2424).